The following is a 206-amino-acid chain: Small ribosomal subunit protein uS4 (206 aa).

One can recognise an S4 RNA-binding domain in the interval 96–156 (GRLDNVVYRM…EKAKKQSRVK (61 aa)).

Belongs to the universal ribosomal protein uS4 family. Part of the 30S ribosomal subunit. Contacts protein S5. The interaction surface between S4 and S5 is involved in control of translational fidelity.

One of the primary rRNA binding proteins, it binds directly to 16S rRNA where it nucleates assembly of the body of the 30S subunit. Functionally, with S5 and S12 plays an important role in translational accuracy. This chain is Small ribosomal subunit protein uS4, found in Enterobacter sp. (strain 638).